Reading from the N-terminus, the 290-residue chain is uncharacterized protein (290 aa).

Disordered stretches follow at residues 17-91 and 220-259; these read QTIS…EKNS and DKAS…QMPN. Residues 40–50 show a composition bias toward polar residues; sequence NITTHLSTGNL. Residues 66 to 83 show a composition bias toward basic residues; sequence STKKGKRVSKPGTKKKEK. Over residues 233 to 249 the composition is skewed to basic and acidic residues; it reads EGEKDGNAEQGKQKEVQ.

This is an uncharacterized protein from Saccharomyces cerevisiae (strain ATCC 204508 / S288c) (Baker's yeast).